A 309-amino-acid polypeptide reads, in one-letter code: tRNA-cytidine(32) 2-sulfurtransferase (309 aa).

The PP-loop motif signature appears at 57-62 (SGGKDS). Residues cysteine 132, cysteine 135, and cysteine 223 each contribute to the [4Fe-4S] cluster site.

The protein belongs to the TtcA family. As to quaternary structure, homodimer. Requires Mg(2+) as cofactor. [4Fe-4S] cluster is required as a cofactor.

The protein resides in the cytoplasm. It carries out the reaction cytidine(32) in tRNA + S-sulfanyl-L-cysteinyl-[cysteine desulfurase] + AH2 + ATP = 2-thiocytidine(32) in tRNA + L-cysteinyl-[cysteine desulfurase] + A + AMP + diphosphate + H(+). The protein operates within tRNA modification. Catalyzes the ATP-dependent 2-thiolation of cytidine in position 32 of tRNA, to form 2-thiocytidine (s(2)C32). The sulfur atoms are provided by the cysteine/cysteine desulfurase (IscS) system. The chain is tRNA-cytidine(32) 2-sulfurtransferase from Variovorax paradoxus (strain S110).